Here is a 2153-residue protein sequence, read N- to C-terminus: Genome polyprotein (2153 aa).

G2 is lipidated: N-myristoyl glycine; by host. Residues H213–D240 are disordered. Over residues P216–R232 the composition is skewed to polar residues. The tract at residues E565–V584 is amphipathic alpha-helix. Catalysis depends on for protease 2A activity residues H864 and D880. Residues C897 and C899 each coordinate Zn(2+). C951 serves as the catalytic For protease 2A activity. Zn(2+)-binding residues include C957 and H959. A membrane-binding region spans residues S1088–Q1158. The oligomerization stretch occupies residues S1088–T1224. The RNA-binding stretch occupies residues S1109–G1113. Positions T1187 to V1346 constitute an SF3 helicase domain. An ATP-binding site is contributed by G1214–S1221. Zn(2+) contacts are provided by C1353, C1365, and C1370. Residues C1353–C1370 form a C4-type; degenerate zinc finger. Residues E1397–V1404 are RNA-binding. Positions L1408–Q1413 are oligomerization. An intramembrane segment occupies V1460–L1480. An O-(5'-phospho-RNA)-tyrosine modification is found at Y1491. One can recognise a Peptidase C3 domain in the interval G1511–F1689. Residues H1550, E1581, and C1657 each act as for protease 3C activity in the active site. Positions G1920–E2033 constitute a RdRp catalytic domain. Positions 1926 and 2019 each coordinate Mg(2+).

It belongs to the picornaviruses polyprotein family. In terms of assembly, interacts with capsid protein VP1 and capsid protein VP3 to form heterotrimeric protomers. As to quaternary structure, interacts with capsid protein VP0, and capsid protein VP3 to form heterotrimeric protomers. Five protomers subsequently associate to form pentamers which serve as building blocks for the capsid. Interacts with capsid protein VP2, capsid protein VP3 and capsid protein VP4 following cleavage of capsid protein VP0. Interacts (via C-terminus) with capsid protein VP4 (via C-terminus). Interacts with host CDHR3 (via N-terminus); this interaction occurs near each threefold vertex of the capsid and allows the virus attachment and entry into the host cell. Interacts with capsid protein VP1 and capsid protein VP3 in the mature capsid. Interacts with host CDHR3 (via N-terminus); this interaction occurs near each threefold vertex of the capsid and allows the virus attachment and entry into the host cell. In terms of assembly, interacts with capsid protein VP0 and capsid protein VP1 to form heterotrimeric protomers. Five protomers subsequently associate to form pentamers which serve as building blocks for the capsid. Interacts with capsid protein VP4 in the mature capsid. Interacts with protein 2C; this interaction may be important for virion morphogenesis. Interacts with host CDHR3 (via N-terminus); this interaction occurs near each threefold vertex of the capsid and allows the virus attachment and entry into the host cell. As to quaternary structure, interacts (via C-terminus) with capsid protein VP1 (via C-terminus). Interacts with capsid protein VP3. Homodimer. In terms of assembly, homohexamer; forms a hexameric ring structure with 6-fold symmetry characteristic of AAA+ ATPases. Interacts (via N-terminus) with host RTN3 (via reticulon domain); this interaction is important for viral replication. Interacts with capsid protein VP3; this interaction may be important for virion morphogenesis. As to quaternary structure, interacts with protein 3CD. Homodimer. Interacts with host GBF1. Interacts (via GOLD domain) with host ACBD3 (via GOLD domain); this interaction allows the formation of a viral protein 3A/ACBD3 heterotetramer with a 2:2 stoichiometry, which will stimulate the recruitment of host PI4KB in order to synthesize PI4P at the viral RNA replication sites. In terms of assembly, interacts with RNA-directed RNA polymerase. As to quaternary structure, interacts with protein 3AB and with RNA-directed RNA polymerase. Interacts with Viral protein genome-linked and with protein 3CD. The cofactor is Mg(2+). Post-translationally, specific enzymatic cleavages in vivo by the viral proteases yield processing intermediates and the mature proteins. In terms of processing, myristoylation is required for the formation of pentamers during virus assembly. Further assembly of 12 pentamers and a molecule of genomic RNA generates the provirion. During virion maturation, immature virions are rendered infectious following cleavage of VP0 into VP4 and VP2. This maturation seems to be an autocatalytic event triggered by the presence of RNA in the capsid and it is followed by a conformational change infectious virion. Post-translationally, myristoylation is required during RNA encapsidation and formation of the mature virus particle. In terms of processing, VPg is uridylylated by the polymerase into VPg-pUpU. This acts as a nucleotide-peptide primer for the genomic RNA replication.

Its subcellular location is the virion. It is found in the host cytoplasm. The protein localises to the host cytoplasmic vesicle membrane. The protein resides in the host nucleus. The enzyme catalyses a ribonucleoside 5'-triphosphate + H2O = a ribonucleoside 5'-diphosphate + phosphate + H(+). The catalysed reaction is Selective cleavage of Gln-|-Gly bond in the poliovirus polyprotein. In other picornavirus reactions Glu may be substituted for Gln, and Ser or Thr for Gly.. It carries out the reaction Selective cleavage of Tyr-|-Gly bond in the picornavirus polyprotein.. It catalyses the reaction RNA(n) + a ribonucleoside 5'-triphosphate = RNA(n+1) + diphosphate. Replication or transcription is subject to high level of random mutations by the nucleotide analog ribavirin. Functionally, forms an icosahedral capsid of pseudo T=3 symmetry with capsid proteins VP2 and VP3. The capsid is 300 Angstroms in diameter, composed of 60 copies of each capsid protein and enclosing the viral positive strand RNA genome. Capsid protein VP1 mainly forms the vertices of the capsid. The VP1 C-termini form 60 dominant spike-like protrusions on the surface of the virion. Capsid protein VP1 interacts with host cell receptor CDHR3 to provide virion attachment to target host cells. This attachment induces virion internalization. Tyrosine kinases are probably involved in the entry process. After binding to its receptor, the capsid undergoes conformational changes. Capsid protein VP1 N-terminus (that contains an amphipathic alpha-helix) and capsid protein VP4 are externalized. Together, they shape a pore in the host membrane through which viral genome is translocated to host cell cytoplasm. Its function is as follows. Forms an icosahedral capsid of pseudo T=3 symmetry with capsid proteins VP2 and VP3. The capsid is 300 Angstroms in diameter, composed of 60 copies of each capsid protein and enclosing the viral positive strand RNA genome. In terms of biological role, lies on the inner surface of the capsid shell. After binding to the host receptor, the capsid undergoes conformational changes. Capsid protein VP4 is released, Capsid protein VP1 N-terminus is externalized, and together, they shape a pore in the host membrane through which the viral genome is translocated into the host cell cytoplasm. Component of immature procapsids, which is cleaved into capsid proteins VP4 and VP2 after maturation. Allows the capsid to remain inactive before the maturation step. Functionally, cysteine protease that cleaves viral polyprotein and specific host proteins. It is responsible for the autocatalytic cleavage between the P1 and P2 regions, which is the first cleavage occurring in the polyprotein. Also cleaves the host translation initiation factor EIF4G1, in order to shut down the capped cellular mRNA translation. Inhibits the host nucleus-cytoplasm protein and RNA trafficking by cleaving host members of the nuclear pores. Counteracts stress granule formation probably by antagonizing its assembly or promoting its dissassembly. Its function is as follows. Plays an essential role in the virus replication cycle by acting as a viroporin. Creates a pore in the host endoplasmic reticulum and as a consequence releases Ca2+ in the cytoplasm of infected cell. In turn, high levels of cytoplasmic calcium may trigger membrane trafficking and transport of viral ER-associated proteins to viroplasms, sites of viral genome replication. In terms of biological role, induces and associates with structural rearrangements of intracellular membranes. Displays RNA-binding, nucleotide binding and NTPase activities. May play a role in virion morphogenesis and viral RNA encapsidation by interacting with the capsid protein VP3. Localizes the viral replication complex to the surface of membranous vesicles. Together with protein 3CD binds the Cis-Active RNA Element (CRE) which is involved in RNA synthesis initiation. Acts as a cofactor to stimulate the activity of 3D polymerase, maybe through a nucleid acid chaperone activity. Functionally, localizes the viral replication complex to the surface of membranous vesicles. It inhibits host cell endoplasmic reticulum-to-Golgi apparatus transport and causes the disassembly of the Golgi complex, possibly through GBF1 interaction. This would result in depletion of MHC, trail receptors and IFN receptors at the host cell surface. Plays an essential role in viral RNA replication by recruiting ACBD3 and PI4KB at the viral replication sites, thereby allowing the formation of the rearranged membranous structures where viral replication takes place. Its function is as follows. Acts as a primer for viral RNA replication and remains covalently bound to viral genomic RNA. VPg is uridylylated prior to priming replication into VPg-pUpU. The oriI viral genomic sequence may act as a template for this. The VPg-pUpU is then used as primer on the genomic RNA poly(A) by the RNA-dependent RNA polymerase to replicate the viral genome. During genome replication, the VPg-RNA linkage is removed by the host TDP2, thereby accelerating replication. During the late stage of the replication cycle, host TDP2 is excluded from sites of viral RNA synthesis and encapsidation, allowing for the generation of progeny virions. In terms of biological role, involved in the viral replication complex and viral polypeptide maturation. It exhibits protease activity with a specificity and catalytic efficiency that is different from protease 3C. Protein 3CD lacks polymerase activity. Protein 3CD binds to the 5'UTR of the viral genome. Major viral protease that mediates proteolytic processing of the polyprotein. Cleaves host EIF5B, contributing to host translation shutoff. Also cleaves host PABPC1, contributing to host translation shutoff. Functionally, replicates the viral genomic RNA on the surface of intracellular membranes. May form linear arrays of subunits that propagate along a strong head-to-tail interaction called interface-I. Covalently attaches UMP to a tyrosine of VPg, which is used to prime RNA synthesis. The positive stranded RNA genome is first replicated at virus induced membranous vesicles, creating a dsRNA genomic replication form. This dsRNA is then used as template to synthesize positive stranded RNA genomes. ss(+)RNA genomes are either translated, replicated or encapsidated. The polypeptide is Genome polyprotein (Homo sapiens (Human)).